We begin with the raw amino-acid sequence, 393 residues long: Isocitrate dehydrogenase [NAD] subunit gamma 1, mitochondrial (393 aa).

Residues 1–39 constitute a mitochondrion transit peptide; that stretch reads MALKVAIAAGSAAKAIFKPALLCRPWEVLAAHEAPRRSI. A citrate-binding site is contributed by T120. S130 is subject to Phosphoserine. N133 is a binding site for citrate. Residues R136 and R167 each coordinate substrate. K206 bears the N6-acetyllysine mark. The residue at position 226 (K226) is an N6-succinyllysine. Substrate is bound at residue D254. A Mn(2+)-binding site is contributed by D254. 3 residues coordinate ADP: N312, T313, and N324.

It belongs to the isocitrate and isopropylmalate dehydrogenases family. As to quaternary structure, heterooligomer of subunits alpha (IDH3A), beta (IDH3B), and gamma (IDH3G) in the apparent ratio of 2:1:1. The heterodimer containing one IDH3A and one IDH3B subunit and the heterodimer containing one IDH3A and one IDH3G subunit assemble into a heterotetramer (which contains two subunits of IDH3A, one of IDH3B and one of IDH3G) and further into the heterooctamer. Mg(2+) is required as a cofactor. The cofactor is Mn(2+).

It is found in the mitochondrion. The heterotetramer and the heterodimer composed of IDH3A and IDH3G subunits can be allosterically activated by citrate (CIT) or/and ADP, and the two activators can act independently or synergistically. The heterodimer composed of IDH3A and IDH3B subunits cannot be allosterically regulated and the allosteric regulation of the heterotetramer is through the IDH3G subunit and not the IDH3B subunit. The IDH3G subunit contains the allosteric site which consists of a CIT-binding site and an ADP-binding site, and the binding of CIT and ADP causes conformational changes at the allosteric site which are transmitted to the active site in the catalytic subunit (IDH3A) through a cascade of conformational changes at the heterodimer interface, leading to stabilization of the isocitrate-binding at the active site and thus activation of the enzyme. ATP can activate the heterotetramer and the heterodimer composed of IDH3A and IDH3G subunits at low concentrations but inhibits their activities at high concentrations, whereas ATP exhibits only inhibitory effect on the heterodimer composed of IDH3A and IDH3B subunits. In terms of biological role, regulatory subunit which plays a role in the allosteric regulation of the enzyme catalyzing the decarboxylation of isocitrate (ICT) into alpha-ketoglutarate. The heterodimer composed of the alpha (IDH3A) and beta (IDH3B) subunits and the heterodimer composed of the alpha (IDH3A) and gamma (IDH3G) subunits, have considerable basal activity but the full activity of the heterotetramer (containing two subunits of IDH3A, one of IDH3B and one of IDH3G) requires the assembly and cooperative function of both heterodimers. The polypeptide is Isocitrate dehydrogenase [NAD] subunit gamma 1, mitochondrial (Idh3g) (Rattus norvegicus (Rat)).